The chain runs to 163 residues: GTP-dependent dephospho-CoA kinase (163 aa).

5 residues coordinate GTP: Asp38, Val39, Asp57, Glu115, and Asp138.

The protein belongs to the GTP-dependent DPCK family.

The enzyme catalyses 3'-dephospho-CoA + GTP = GDP + CoA + H(+). The protein operates within cofactor biosynthesis; coenzyme A biosynthesis. Catalyzes the GTP-dependent phosphorylation of the 3'-hydroxyl group of dephosphocoenzyme A to form coenzyme A (CoA). The polypeptide is GTP-dependent dephospho-CoA kinase (Methanothermobacter thermautotrophicus (strain ATCC 29096 / DSM 1053 / JCM 10044 / NBRC 100330 / Delta H) (Methanobacterium thermoautotrophicum)).